The sequence spans 105 residues: Cortistatin (105 aa).

The first 18 residues, 1 to 18 (MPLSPGLLLLLLSGATAT), serve as a signal peptide directing secretion. Positions 19-74 (AALPLEGGPTGRDSEHMQEAAGIRKSSLLTFLAWWFEWTSQASAGPLIGEEAREVA) are excised as a propeptide. Cysteines 93 and 104 form a disulfide.

The protein belongs to the somatostatin family. As to expression, expressed in a subset of GABAergic cells in the cortex and hippocampus.

Its subcellular location is the secreted. Binds to all human somatostatin receptor (SSTR) subtypes. It also inhibits cAMP production induced by forskolin through SSTRs. In Homo sapiens (Human), this protein is Cortistatin (CORT).